We begin with the raw amino-acid sequence, 84 residues long: UPF0410 protein YmgE (84 aa).

3 helical membrane passes run 1 to 21 (MGII…KLIM), 27 to 47 (GGFF…GWLA), and 58 to 78 (GFNL…LGVF).

This sequence belongs to the UPF0410 family.

It is found in the cell inner membrane. The polypeptide is UPF0410 protein YmgE (ymgE) (Escherichia coli O127:H6 (strain E2348/69 / EPEC)).